A 376-amino-acid polypeptide reads, in one-letter code: Succinyl-diaminopimelate desuccinylase (376 aa).

Position 67 (His-67) interacts with Zn(2+). Asp-69 is a catalytic residue. Asp-100 contacts Zn(2+). Catalysis depends on Glu-134, which acts as the Proton acceptor. Glu-135, Glu-163, and His-349 together coordinate Zn(2+).

It belongs to the peptidase M20A family. DapE subfamily. Homodimer. Requires Zn(2+) as cofactor. The cofactor is Co(2+).

The catalysed reaction is N-succinyl-(2S,6S)-2,6-diaminopimelate + H2O = (2S,6S)-2,6-diaminopimelate + succinate. It participates in amino-acid biosynthesis; L-lysine biosynthesis via DAP pathway; LL-2,6-diaminopimelate from (S)-tetrahydrodipicolinate (succinylase route): step 3/3. Functionally, catalyzes the hydrolysis of N-succinyl-L,L-diaminopimelic acid (SDAP), forming succinate and LL-2,6-diaminopimelate (DAP), an intermediate involved in the bacterial biosynthesis of lysine and meso-diaminopimelic acid, an essential component of bacterial cell walls. In Shewanella woodyi (strain ATCC 51908 / MS32), this protein is Succinyl-diaminopimelate desuccinylase.